Consider the following 802-residue polypeptide: Protein SBE22 (802 aa).

Disordered regions lie at residues 207-230 (SSTI…RSNS) and 323-345 (SGDP…QRHN).

This sequence belongs to the SBE2 family.

It localises to the cytoplasm. Its subcellular location is the golgi apparatus. With SBE2, is involved in cell wall integrity and polarity processes like bud growth. This Vanderwaltozyma polyspora (strain ATCC 22028 / DSM 70294 / BCRC 21397 / CBS 2163 / NBRC 10782 / NRRL Y-8283 / UCD 57-17) (Kluyveromyces polysporus) protein is Protein SBE22 (SBE22).